The chain runs to 162 residues: MKIDKAIFTNQFGVPLPSDNPYVALHDFVYDLEVAIPEDEFEAFKEQLANPRNSCIIFQTYEMLQELKDGQSSLREDLNHLSHGQNVLKKNMVYLNGTFECISNVIRANNQILMLEFGKSNRKSEEILNYKSAKQMNSNLSTIYRVLPLIKIFLMNIRNCLN.

This is an uncharacterized protein from Schizosaccharomyces pombe (strain 972 / ATCC 24843) (Fission yeast).